The chain runs to 383 residues: MNELEFVTLHRRHLHQYPELSLHEFETTSYITSFLEDLGVPYDRPLKTGVIAYLEGNSHHTIAFRADIDALPIYEENDIDFKSKNDNVMHACGHDGHTTALMLFVKRCKALYDKSELPHNVVFIFQPAEETGGGANRLIKAGAFDKYPIEAVFGFHVNPFEKEGKIVIRDEEITASATEYRFFLKGLSSHVADKEQGHSCGEGLQHVLSQIGQIQQFHLNGLKRNIIHMGHFEAGEAINTVPSHGYLEGTIRTYDTEDLAIVKHQMHKIAKSVQLLFNVECEVKFEEGYPPTMNHPQLRQAVENAIKGANLEIVEKKLPFLFGEDFSFYGQQLAPSYFVFVGTQNNEKGFVTGLHTAHLNFDEKILIDVVNYYEHLLRNYKEV.

The protein belongs to the peptidase M20 family.

This is an uncharacterized protein from Staphylococcus epidermidis (strain ATCC 12228 / FDA PCI 1200).